A 437-amino-acid chain; its full sequence is NADH-ubiquinone oxidoreductase chain 4 (437 aa).

The next 13 membrane-spanning stretches (helical) occupy residues 8–28 (GASICLFPFWEVTMLTLAFII), 50–70 (LTPIGTALIFLTLMVTLLVLI), 78–98 (YKYIGCLSSLNLVLMMAFCVC), 100–120 (FLTFYVMFEVSLIPTLLLILL), 132–152 (FYLMLYTVTASLPLLLLLLYL), 177–197 (LVGLMMAFLVKLPIYTCHLWL), 212–232 (LAGVLLKLGGYGLYMLINFII), 239–259 (VISVIITLSLWGAVIASIICI), 266–286 (ALVAYSSVAHMSLVSAGILMM), 297–317 (TMIAHGYTSSALFVLANLSYL), 324–344 (LMFMKGLLAIFPAMAFYWFLF), 361–381 (LLIIPSMYIASYMLLILMCII), and 417–437 (HVLTAHLLPTFILLIPQLFSV).

This sequence belongs to the complex I subunit 4 family.

The protein localises to the mitochondrion membrane. The catalysed reaction is a ubiquinone + NADH + 5 H(+)(in) = a ubiquinol + NAD(+) + 4 H(+)(out). Its function is as follows. Core subunit of the mitochondrial membrane respiratory chain NADH dehydrogenase (Complex I) that is believed to belong to the minimal assembly required for catalysis. Complex I functions in the transfer of electrons from NADH to the respiratory chain. The immediate electron acceptor for the enzyme is believed to be ubiquinone. In Albinaria caerulea (Land snail), this protein is NADH-ubiquinone oxidoreductase chain 4 (ND4).